The chain runs to 161 residues: Lipoprotein signal peptidase (161 aa).

Helical transmembrane passes span Pro11 to Val31, Leu44 to Phe64, Gly66 to Ala86, and Gly100 to Ile120. Catalysis depends on residues Asp121 and Asp137. Residues Leu135–Val155 form a helical membrane-spanning segment.

It belongs to the peptidase A8 family.

Its subcellular location is the cell inner membrane. The enzyme catalyses Release of signal peptides from bacterial membrane prolipoproteins. Hydrolyzes -Xaa-Yaa-Zaa-|-(S,diacylglyceryl)Cys-, in which Xaa is hydrophobic (preferably Leu), and Yaa (Ala or Ser) and Zaa (Gly or Ala) have small, neutral side chains.. Its pathway is protein modification; lipoprotein biosynthesis (signal peptide cleavage). Functionally, this protein specifically catalyzes the removal of signal peptides from prolipoproteins. This chain is Lipoprotein signal peptidase, found in Synechocystis sp. (strain ATCC 27184 / PCC 6803 / Kazusa).